The primary structure comprises 99 residues: Acylphosphatase (99 aa).

The Acylphosphatase-like domain occupies 5 to 97; it reads IRQVMVRGRV…YAGERFSILS (93 aa). Residues Arg20 and Asn38 contribute to the active site.

The protein belongs to the acylphosphatase family.

It catalyses the reaction an acyl phosphate + H2O = a carboxylate + phosphate + H(+). The protein is Acylphosphatase (acyP) of Rhodopseudomonas palustris (strain BisB5).